The primary structure comprises 631 residues: Peptidyl-prolyl cis-trans isomerase CYP71 (631 aa).

A disordered region spans residues 26–45; sequence VEEEEPMVGPGPAPRGKRKR. WD repeat units follow at residues 68–106, 111–150, 201–240, and 257–297; these read MHRDVVTHVAVSAAEFFISGSMDGHLKFWKKKGVGIEFA, SHLGPIEGLAVSIDGLLCCTISNDHAVKIYDVVNYDMMAM, IHMNPIKVMKYNPVSDTMISGDTKGIIEYWSATTLQFPED, and KCKT…RRVY. Positions 474 to 628 constitute a PPIase cyclophilin-type domain; that stretch reads LPENVIMHTT…QDVKILNVTV (155 aa).

The protein belongs to the cyclophilin-type PPIase family. In terms of assembly, interacts with FAS1 and LHP1. Interacts (via WD repeat domain) with histone H3. In terms of tissue distribution, ubiquitous. Expressed in the meristems.

The protein localises to the nucleus. The catalysed reaction is [protein]-peptidylproline (omega=180) = [protein]-peptidylproline (omega=0). PPIases accelerate the folding of proteins. It catalyzes the cis-trans isomerization of proline imidic peptide bonds in oligopeptides. Histone proline isomerase that increases the rate of cis-trans isomerization of the synthetic histone H3 peptides H3P30 (RKSAP30F-p-nitroanilide) and H3P30K27me3 (RKme3-SAP30F-p-nitroanilide) in the histone H3 N-terminal tail, in vitro. Histone remodeling factor involved in chromatin-based gene silencing. Reinforces H3K27 methylation. Involved in fundamental processes of chromatin assembly and histone modification by mediating the targeting of FAS1 and LHP1 on the chromatin. Required for the formation and development of leaves, for normal phyllotaxy and for the formation, maintenance and activity of root and shoot apical meristems. This is Peptidyl-prolyl cis-trans isomerase CYP71 from Arabidopsis thaliana (Mouse-ear cress).